Reading from the N-terminus, the 635-residue chain is Extracellular metalloproteinase MEP (635 aa).

Positions 1 to 19 (MRYSLSLALLGVAAVTVVA) are cleaved as a signal peptide. The propeptide occupies 20-242 (HPHTPGRHGV…VHGVVDYVSH (223 aa)). H428 lines the Zn(2+) pocket. Residue E429 is part of the active site. H432 is a Zn(2+) binding site. N-linked (GlcNAc...) asparagine glycosylation is present at N473.

The protein belongs to the peptidase M36 family. It depends on Zn(2+) as a cofactor.

The protein localises to the secreted. Functionally, secreted metalloproteinase that allows assimilation of proteinaceous substrates. The protein is Extracellular metalloproteinase MEP (MEP) of Pyricularia oryzae (strain 70-15 / ATCC MYA-4617 / FGSC 8958) (Rice blast fungus).